The following is a 620-amino-acid chain: uncharacterized protein (620 aa).

This sequence belongs to the chlamydial CPn_0512/CT_425/TC_0708 family.

This is an uncharacterized protein from Chlamydia pneumoniae (Chlamydophila pneumoniae).